Consider the following 676-residue polypeptide: Envelope glycoprotein (676 aa).

An N-terminal signal peptide occupies residues 1-32; sequence MEGLSLLQLPRDKFRKSSFFVWVIILFQKAFS. At 33-650 the chain is on the extracellular side; it reads MPLGVVTNST…DDNWWTGWRQ (618 aa). N40 carries N-linked (GlcNAc...) asparagine; by host glycosylation. 5 cysteine pairs are disulfide-bonded: C53–C609, C108–C135, C121–C147, C511–C556, and C601–C608. Residues 54–201 form a receptor-binding region; it reads KDHLASTDQL…TFLQSPPIRE (148 aa). N-linked (GlcNAc...) asparagine; by host glycans are attached at residues N204, N208, N238, N257, N268, N296, and N314. The interval 305-485 is mucin-like region; sequence ELSFETLSLN…STSNGLITST (181 aa). The tract at residues 313-351 is disordered; it reads LNETEDDDATSSRTTKGRISDRATRKYSDLVPKDSPGMV. The segment covering 330–344 has biased composition (basic and acidic residues); that stretch reads RISDRATRKYSDLVP. Residue N366 is glycosylated (N-linked (GlcNAc...) asparagine; by host). Residues 406–458 are disordered; that stretch reads SSSQILSSSPTMAPSPETQTSTTYTPKLPVMTTEESTTPPRNSPGSTTEAPTL. 2 stretches are compositionally biased toward polar residues: residues 415 to 430 and 438 to 458; these read PTMA…TTYT and TEES…APTL. N463 carries an N-linked (GlcNAc...) asparagine; by host glycan. Residues 524–539 form a fusion peptide region; sequence HNAAGIAWIPYFGPGA. The stretch at 554–595 forms a coiled coil; it reads LVCGLRQLANETTQALQLFLRATTELRTYTILNRKAIDFLLR. N-linked (GlcNAc...) asparagine; by host glycosylation occurs at N563. The stretch at 615 to 634 forms a coiled coil; sequence WTKNITDKINQIIHDFIDNP. N618 is a glycosylation site (N-linked (GlcNAc...) asparagine; by host). Residues 651 to 671 form a helical membrane-spanning segment; it reads WIPAGIGITGIIIAIIALLCV. Residues C670 and C672 are each lipidated (S-palmitoyl cysteine; by host). The Cytoplasmic portion of the chain corresponds to 672–676; the sequence is CKLLC.

Belongs to the filoviruses glycoprotein family. Homotrimer; each monomer consists of a GP1 and a GP2 subunit linked by disulfide bonds. The resulting peplomers (GP1,2) protrude from the virus surface as spikes. Interacts with host integrin alpha-V/ITGAV. Interacts with host CLEC10A. Binds also to host CD209 and CLEC4M/DC-SIGN(R). Interacts with host FOLR1. Interacts with BST2; this interaction inhibits the antiviral effect of BST2 and this allows viral release from infected cells. Interacts with host FCN1; this interaction enhances viral entry. Interacts with host TLR4; this interaction induces cell death in T-lymphocytes or proinflammatory cytokines and SOCS1 production in monocytes. In terms of assembly, interacts with host entry receptor NPC1. As to quaternary structure, GP1 and GP2delta are part of GP1,2delta soluble complexes released by ectodomain shedding. The signal peptide region modulates GP's high mannose glycosylation, thereby determining the efficiency of the interactions with DC-SIGN(R). Post-translationally, N-glycosylated. In terms of processing, O-glycosylated in the mucin-like region. Palmitoylation of GP2 is not required for its function. Post-translationally, specific enzymatic cleavages in vivo yield mature proteins. The precursor is processed into GP1 and GP2 by host cell furin in the trans Golgi, and maybe by other host proteases, to yield the mature GP1 and GP2 proteins. The cleavage site corresponds to the furin optimal cleavage sequence [KR]-X-[KR]-R. This cleavage does not seem to be required for function. After the internalization of the virus into cell endosomes, GP1 C-terminus is removed by the endosomal proteases cathepsin B, cathepsin L, or both, leaving a 19-kDa N-terminal fragment which is further digested by cathepsin B. Proteolytic processing of GP1,2 by host ADAM17 can remove the transmembrane anchor of GP2 and leads to shedding of complexes consisting in GP1 and truncated GP2 (GP1,2delta).

The protein resides in the virion membrane. It localises to the host cell membrane. It is found in the secreted. Functionally, trimeric GP1,2 complexes form the virion surface spikes and mediate the viral entry processes, with GP1 acting as the receptor-binding subunit and GP2 as the membrane fusion subunit. At later times of infection, down-regulates the expression of various host cell surface molecules that are essential for immune surveillance and cell adhesion. Down-modulates several integrins including ITGA1, ITGA2, ITGA3, ITGA4, ITGA5, ITGA6, ITGAV and ITGB1. This decrease in cell adhesion molecules may lead to cell detachment, contributing to the disruption of blood vessel integrity and hemorrhages developed during infection (cytotoxicity). Interacts with host TLR4 and thereby stimulates the differentiation and activation of monocytes leading to bystander death of T-lymphocytes. Down-regulates as well the function of host natural killer cells. Counteracts the antiviral effect of host BST2/tetherin that restricts release of progeny virions from infected cells. However, cooperates with VP40 and host BST2 to activate canonical NF-kappa-B pathway in a manner dependent on neddylation. In terms of biological role, functions as a decoy for anti-GP1,2 antibodies thereby contributing to viral immune evasion. Interacts and activates host macrophages and dendritic cells inducing up-regulation of cytokine transcription. This effect is mediated throught activation of host TLR4. Its function is as follows. Responsible for binding to the receptor(s) on target cells. Interacts with CD209/DC-SIGN and CLEC4M/DC-SIGNR which act as cofactors for virus entry into dendritic cells (DCs) and endothelial cells. Binding to the macrophage specific lectin CLEC10A also seem to enhance virus infectivity. Interaction with FOLR1/folate receptor alpha may be a cofactor for virus entry in some cell types, although results are contradictory. Members of the Tyro3 receptor tyrosine kinase family also seem to be cell entry factors in filovirus infection. Once attached, the virions are internalized through clathrin-dependent endocytosis and/or macropinocytosis. After internalization of the virus into the endosomes of the host cell, proteolysis of GP1 by two cysteine proteases, CTSB/cathepsin B and CTSL/cathepsin L removes the glycan cap and allows GP1 binding to the host entry receptor NPC1. NPC1-binding, Ca(2+) and acidic pH induce a conformational change of GP2, which unmasks its fusion peptide and permit membranes fusion. Acts as a class I viral fusion protein. Under the current model, the protein has at least 3 conformational states: pre-fusion native state, pre-hairpin intermediate state, and post-fusion hairpin state. During viral and target cell membrane fusion, the coiled coil regions (heptad repeats) assume a trimer-of-hairpins structure, positioning the fusion peptide in close proximity to the C-terminal region of the ectodomain. The formation of this structure appears to drive apposition and subsequent fusion of viral and target cell membranes. Responsible for penetration of the virus into the cell cytoplasm by mediating the fusion of the membrane of the endocytosed virus particle with the endosomal membrane. Low pH in endosomes induces an irreversible conformational change in GP2, releasing the fusion hydrophobic peptide. The polypeptide is Envelope glycoprotein (GP) (Epomops franqueti (Franquet's epauletted fruit bat)).